The chain runs to 483 residues: Myosin-binding protein H (483 aa).

The span at 1–15 (MTGKATSEASVSTPE) shows a compositional bias: polar residues. Positions 1 to 78 (MTGKATSEAS…PEPPSEDVPS (78 aa)) are disordered. Threonine 2, threonine 6, and threonine 26 each carry phosphothreonine. Over residues 41–66 (QEQAPEPQKPQAQDPAAPAASAMPAA) the composition is skewed to low complexity. The region spanning 79–174 (APLRLTLEDV…LDQPVHIQEI (96 aa)) is the Fibronectin type-III 1 domain. An Ig-like C2-type 1 domain is found at 178-266 (PKIRVPRHLR…EGLEAKASID (89 aa)). The 96-residue stretch at 275-370 (PPSSIKLLDV…TKELAHIHKA (96 aa)) folds into the Fibronectin type-III 2 domain. One can recognise an Ig-like C2-type 2 domain in the interval 388–472 (PSFTQPLADH…INVLGEASVD (85 aa)).

This sequence belongs to the immunoglobulin superfamily. MyBP family. As to expression, skeletal muscle. Expressed at low levels in heart ventricles.

Functionally, binds to myosin; probably involved in interaction with thick myofilaments in the A-band. The polypeptide is Myosin-binding protein H (Mybph) (Mus musculus (Mouse)).